We begin with the raw amino-acid sequence, 212 residues long: Ropporin-1A (212 aa).

The RIIa domain occupies 12 to 49 (PELPKMLKEFAKAAIRVQPQDLIQWAADYFEALSRGET). The residue at position 56 (Ser56) is a Phosphoserine. Positions 209–212 (VQLE) are interaction with RHPN1.

The protein belongs to the ropporin family. Homodimer. Interacts with AKAP3 and RHPN1. May interact with SPA17. Interacts with FSCB; the interaction increases upon spermatozoa capacitation conditions. Interacts with CFAP61. Sumoylated, sumoylation decreases upon spermatozoa capacitation conditions. As to expression, testis specific in adult. Overexpressed in hematologic tumor cells.

Its subcellular location is the cell projection. The protein localises to the cilium. It localises to the flagellum. Functionally, important for male fertility. With ROPN1L, involved in fibrous sheath integrity and sperm motility, plays a role in PKA-dependent signaling processes required for spermatozoa capacitation. The chain is Ropporin-1A (ROPN1) from Homo sapiens (Human).